The primary structure comprises 389 residues: Calreticulin (389 aa).

A signal peptide spans 1-13; it reads MFTLFLLIALSSA. The tract at residues 12 to 189 is N-domain; it reads SAKVYFHETF…GVEKQEGKFD (178 aa). Ca(2+) is bound by residues T20, N52, and N53. C96 and C130 form a disulfide bridge. An alpha-D-glucoside is bound by residues Y100, K102, Y121, and D128. 7 tandem repeats follow at residues 183 to 194, 202 to 213, 219 to 230, 237 to 248, 252 to 262, 266 to 276, and 280 to 290. The segment at 183–248 is 4 X approximate repeats; sequence KQEGKFDEDW…NAKKPEEWND (66 aa). A P-domain region spans residues 190–301; sequence EDWDMLAPKE…YVYDPELYKY (112 aa). Over residues 213–232 the composition is skewed to basic and acidic residues; that stretch reads DEKEIDDPNDKKPEGWDDIP. The interval 213 to 256 is disordered; it reads DEKEIDDPNDKKPEGWDDIPKTIVDPNAKKPEEWNDEDDGEWEA. The segment at 252–290 is 3 X approximate repeats; sequence GEWEAPTIENPEYKGEWKPKRIPNPAYKGEWVHPQIANP. The tract at residues 302–389 is C-domain; sequence DSFAYIGIDV…IKKEENKEEL (88 aa). D310 provides a ligand contact to an alpha-D-glucoside. D321 contacts Ca(2+). A coiled-coil region spans residues 329–388; that stretch reads IEEAEKEAKVILERNAAEKKMRDEIKEAEKQKEEEAKKEAEKQKEEETKEEIKKEENKEE. Residues 347–389 form a disordered region; the sequence is KKMRDEIKEAEKQKEEEAKKEAEKQKEEETKEEIKKEENKEEL. The Prevents secretion from ER motif lies at 386–389; that stretch reads KEEL.

It belongs to the calreticulin family. As to quaternary structure, interacts (via C-terminus) with host C1q.

It localises to the endoplasmic reticulum lumen. The protein localises to the cell projection. It is found in the uropodium. Its subcellular location is the cell surface. The protein resides in the phagocytic cup. Functionally, molecular calcium-binding chaperone promoting folding, oligomeric assembly and quality control in the ER via the calreticulin/calnexin cycle. This lectin may interact transiently with almost all of the monoglucosylated glycoproteins that are synthesized in the ER. Plays a role in host cell phagocytosis, possibly by acting as a receptor for host C1q. Binding to C1q prevents the activation of the host classical complement pathway. Also, binds to apoptotic host cells independently of host C1q and collectins. The chain is Calreticulin from Entamoeba histolytica (strain ATCC 30459 / HM-1:IMSS / ABRM).